Consider the following 156-residue polypeptide: Ribosome maturation factor RimP (156 aa).

Belongs to the RimP family.

It is found in the cytoplasm. In terms of biological role, required for maturation of 30S ribosomal subunits. This is Ribosome maturation factor RimP from Lachnospira eligens (strain ATCC 27750 / DSM 3376 / VPI C15-48 / C15-B4) (Eubacterium eligens).